We begin with the raw amino-acid sequence, 560 residues long: 2-succinyl-5-enolpyruvyl-6-hydroxy-3-cyclohexene-1-carboxylate synthase (560 aa).

Belongs to the TPP enzyme family. MenD subfamily. As to quaternary structure, homodimer. Requires Mg(2+) as cofactor. It depends on Mn(2+) as a cofactor. The cofactor is thiamine diphosphate.

It carries out the reaction isochorismate + 2-oxoglutarate + H(+) = 5-enolpyruvoyl-6-hydroxy-2-succinyl-cyclohex-3-ene-1-carboxylate + CO2. It functions in the pathway quinol/quinone metabolism; 1,4-dihydroxy-2-naphthoate biosynthesis; 1,4-dihydroxy-2-naphthoate from chorismate: step 2/7. Its pathway is quinol/quinone metabolism; menaquinone biosynthesis. Catalyzes the thiamine diphosphate-dependent decarboxylation of 2-oxoglutarate and the subsequent addition of the resulting succinic semialdehyde-thiamine pyrophosphate anion to isochorismate to yield 2-succinyl-5-enolpyruvyl-6-hydroxy-3-cyclohexene-1-carboxylate (SEPHCHC). In Pectobacterium carotovorum subsp. carotovorum (strain PC1), this protein is 2-succinyl-5-enolpyruvyl-6-hydroxy-3-cyclohexene-1-carboxylate synthase.